Reading from the N-terminus, the 270-residue chain is Interleukin-1 beta (270 aa).

A propeptide spanning residues 1–118 is cleaved from the precursor; sequence MARVPEPTSE…KCDDNAFVHD (118 aa).

This sequence belongs to the IL-1 family. As to quaternary structure, monomer. In its precursor form, weakly interacts with full-length MEFV; the mature cytokine does not interact at all. Interacts with integrins ITGAV:ITGBV and ITGA5:ITGB1; integrin-binding is required for IL1B signaling. Interacts with cargo receptor TMED10; the interaction is direct and is required for the secretion of IL1B mature form. Interacts with HSP90AB1; the interaction facilitates cargo translocation into the ERGIC. Interacts with HSP90B1; the interaction facilitates cargo translocation into the ERGIC.

The protein localises to the cytoplasm. It is found in the cytosol. The protein resides in the secreted. It localises to the lysosome. Its subcellular location is the extracellular exosome. In terms of biological role, potent pro-inflammatory cytokine. Initially discovered as the major endogenous pyrogen, induces prostaglandin synthesis, neutrophil influx and activation, T-cell activation and cytokine production, B-cell activation and antibody production, and fibroblast proliferation and collagen production. Promotes Th17 differentiation of T-cells. Synergizes with IL12/interleukin-12 to induce IFNG synthesis from T-helper 1 (Th1) cells. Plays a role in angiogenesis by inducing VEGF production synergistically with TNF and IL6. Involved in transduction of inflammation downstream of pyroptosis: its mature form is specifically released in the extracellular milieu by passing through the gasdermin-D (GSDMD) pore. The sequence is that of Interleukin-1 beta (IL1B) from Mustela putorius furo (European domestic ferret).